We begin with the raw amino-acid sequence, 320 residues long: Phosphate acyltransferase (320 aa).

It belongs to the PlsX family. As to quaternary structure, homodimer. Probably interacts with PlsY.

It localises to the cytoplasm. The enzyme catalyses a fatty acyl-[ACP] + phosphate = an acyl phosphate + holo-[ACP]. The protein operates within lipid metabolism; phospholipid metabolism. In terms of biological role, catalyzes the reversible formation of acyl-phosphate (acyl-PO(4)) from acyl-[acyl-carrier-protein] (acyl-ACP). This enzyme utilizes acyl-ACP as fatty acyl donor, but not acyl-CoA. This Chlamydia pneumoniae (Chlamydophila pneumoniae) protein is Phosphate acyltransferase.